A 305-amino-acid polypeptide reads, in one-letter code: Acetyl-coenzyme A carboxylase carboxyl transferase subunit beta (305 aa).

One can recognise a CoA carboxyltransferase N-terminal domain in the interval 29-298 (LWTKCESCDA…EMKLPLLESS (270 aa)). 4 residues coordinate Zn(2+): C33, C36, C52, and C55. The segment at 33-55 (CESCDALTYTKDLQANLMVCLQC) adopts a C4-type zinc-finger fold.

Belongs to the AccD/PCCB family. Acetyl-CoA carboxylase is a heterohexamer composed of biotin carboxyl carrier protein (AccB), biotin carboxylase (AccC) and two subunits each of ACCase subunit alpha (AccA) and ACCase subunit beta (AccD). The cofactor is Zn(2+).

The protein resides in the cytoplasm. It catalyses the reaction N(6)-carboxybiotinyl-L-lysyl-[protein] + acetyl-CoA = N(6)-biotinyl-L-lysyl-[protein] + malonyl-CoA. It participates in lipid metabolism; malonyl-CoA biosynthesis; malonyl-CoA from acetyl-CoA: step 1/1. Functionally, component of the acetyl coenzyme A carboxylase (ACC) complex. Biotin carboxylase (BC) catalyzes the carboxylation of biotin on its carrier protein (BCCP) and then the CO(2) group is transferred by the transcarboxylase to acetyl-CoA to form malonyl-CoA. This is Acetyl-coenzyme A carboxylase carboxyl transferase subunit beta from Synechococcus sp. (strain ATCC 27144 / PCC 6301 / SAUG 1402/1) (Anacystis nidulans).